The following is a 61-amino-acid chain: Sperm protamine P1 (61 aa).

The segment at 1–61 is disordered; it reads MARYRHSRSR…RRYSRRRRRY (61 aa).

It belongs to the protamine P1 family. In terms of tissue distribution, testis.

It is found in the nucleus. The protein resides in the chromosome. Its function is as follows. Protamines substitute for histones in the chromatin of sperm during the haploid phase of spermatogenesis. They compact sperm DNA into a highly condensed, stable and inactive complex. This chain is Sperm protamine P1 (PRM1), found in Macropus giganteus (Eastern gray kangaroo).